The primary structure comprises 362 residues: UV excision repair protein RAD23 homolog A (362 aa).

Residues Met-1–Thr-81 form the Ubiquitin-like domain. Disordered regions lie at residues Lys-80 to Gly-160 and Gly-201 to Gly-227. Residues Pro-88–Ser-109 show a composition bias toward low complexity. Residue Lys-122 forms a Glycyl lysine isopeptide (Lys-Gly) (interchain with G-Cter in ubiquitin) linkage. Phosphoserine is present on residues Ser-123, Ser-128, Ser-133, Ser-136, and Ser-138. Over residues Glu-126–Ser-144 the composition is skewed to low complexity. A UBA 1 domain is found at Ser-161–Gly-201. A phosphoserine mark is found at Ser-205, Ser-294, and Ser-356. The UBA 2 domain occupies Pro-317–Gln-357.

Belongs to the RAD23 family. Interacts with XPC; the interaction is suggesting the existence of a functional equivalent variant XPC complex. Interacts with PSMD4 and PSMC5. Interacts with ATXN3. Interacts with UBQLN2.

Its subcellular location is the nucleus. Multiubiquitin chain receptor involved in modulation of proteasomal degradation. Binds to 'Lys-48'-linked polyubiquitin chains in a length-dependent manner and with a lower affinity to 'Lys-63'-linked polyubiquitin chains. Proposed to be capable to bind simultaneously to the 26S proteasome and to polyubiquitinated substrates and to deliver ubiquitinated proteins to the proteasome. Its function is as follows. Involved in nucleotide excision repair and is thought to be functional equivalent for RAD23B in global genome nucleotide excision repair (GG-NER) by association with XPC. In vitro, XPC:RAD23A dimer has NER activity. Can stabilize XPC. The polypeptide is UV excision repair protein RAD23 homolog A (RAD23A) (Bos taurus (Bovine)).